Consider the following 512-residue polypeptide: GMP synthase [glutamine-hydrolyzing] (512 aa).

In terms of domain architecture, Glutamine amidotransferase type-1 spans 7-197; that stretch reads TIIVLDFGSQ…VFGVCGCSEG (191 aa). Residue Cys-84 is the Nucleophile of the active site. Catalysis depends on residues His-171 and Glu-173. Residues 198–387 enclose the GMPS ATP-PPase domain; that stretch reads WNMENFIEVE…LGIPDEIVWR (190 aa). Position 225 to 231 (225 to 231) interacts with ATP; it reads SGGVDSS.

Homodimer.

The catalysed reaction is XMP + L-glutamine + ATP + H2O = GMP + L-glutamate + AMP + diphosphate + 2 H(+). Its pathway is purine metabolism; GMP biosynthesis; GMP from XMP (L-Gln route): step 1/1. Its function is as follows. Catalyzes the synthesis of GMP from XMP. The sequence is that of GMP synthase [glutamine-hydrolyzing] from Bacillus cytotoxicus (strain DSM 22905 / CIP 110041 / 391-98 / NVH 391-98).